We begin with the raw amino-acid sequence, 342 residues long: MRVDLFDFELPSENIALRPARPRDSARLLGVGRDGPFRDLIVRDLPDLLNPGDVLVFNDTRVIPAQLEGQRGEARVGATLHKRIDLRRWQAFVRNAKRLREGDVIQFGAGVTATAEMRLPDGSWTLFFPGEEPVEVLLERAGRMPLPPYIAGKRPTDEQDREDYQTMFAAKDGAVAAPTAALHFTPSLMEALAARGVATETLTLHVGAGTFLPVKADDTQDHQMHAEWGTIDAATADRLNAARAAGKRVIAVGTTSLRLLESATGEDRVIRPFEGDTSIFITPGYTFRAIDGLMTNFHLPKSTLFMLVSALMGLDRMQAAYAHAIAGGYRFYSYGDSSLLLP.

The protein belongs to the QueA family. In terms of assembly, monomer.

It is found in the cytoplasm. It catalyses the reaction 7-aminomethyl-7-carbaguanosine(34) in tRNA + S-adenosyl-L-methionine = epoxyqueuosine(34) in tRNA + adenine + L-methionine + 2 H(+). It participates in tRNA modification; tRNA-queuosine biosynthesis. Functionally, transfers and isomerizes the ribose moiety from AdoMet to the 7-aminomethyl group of 7-deazaguanine (preQ1-tRNA) to give epoxyqueuosine (oQ-tRNA). This is S-adenosylmethionine:tRNA ribosyltransferase-isomerase from Novosphingobium aromaticivorans (strain ATCC 700278 / DSM 12444 / CCUG 56034 / CIP 105152 / NBRC 16084 / F199).